A 632-amino-acid polypeptide reads, in one-letter code: Palmitoyltransferase ZDHHC17 (632 aa).

The Cytoplasmic portion of the chain corresponds to 1 to 304 (MQREEGFNTK…LKADKEFRQK (304 aa)). A necessary and sufficient for interaction with DNAJC5 and SNAP25 region spans residues 11–305 (MADGPDEYDT…KADKEFRQKV (295 aa)). 7 ANK repeats span residues 51-86 (THIDDYSTWDIVKATQYGIYERCRELVEAGYDVRQP), 89-118 (ENVTLLHWAAINNRIDLVKYYISKGAIVDQ), 123-152 (LNSTPLHWATRQGHLSMVVQLMKYGADPSL), 156-185 (EGCSCIHLAAQFGHTSIVAYLIAKGQDVDM), 189-219 (NGMTPLMWAAYRTHSVDPTRLLLTFNVSVNL), 224-253 (HKNTALHWAVLAGNTTVISLLLEAGANVDA), and 257-286 (KGESALDLAKQRKNVWMINHLQEARQAKGY). Helical transmembrane passes span 305–325 (VMLGTPFLVIWLVGFIADLNI) and 326–346 (DSWLIKGLMYGGVWATVQFLS). Over 347-357 (KSFFDHSMHSA) the chain is Cytoplasmic. Residues 358 to 378 (LPLGIYLATKFWMYVTWFFWF) traverse the membrane as a helical segment. Over 379-381 (WND) the chain is Lumenal. Residues 382–402 (LNFLFIHLPFLANSVALFYNF) form a helical membrane-spanning segment. Topologically, residues 403 to 480 (GKSWKSDPGI…GNCVGAGNHR (78 aa)) are cytoplasmic. In terms of domain architecture, DHHC spans 437 to 487 (IFCSTCLIRKPVRSKHCGVCNRCIAKFDHHCPWVGNCVGAGNHRYFMGYLF). The active-site S-palmitoyl cysteine intermediate is the Cys-467. Residues 481-501 (YFMGYLFFLLFMICWMIYGCI) traverse the membrane as a helical segment. At 502–529 (SYWGLHCETTYTKDGFWTYITQIATCSP) the chain is on the lumenal side. Residues 530-550 (WMFWMFLNSVFHFMWVAVLLM) traverse the membrane as a helical segment. The Cytoplasmic segment spans residues 551-632 (CQMYQISCLG…QISGSGYQLV (82 aa)).

This sequence belongs to the DHHC palmitoyltransferase family. AKR/ZDHHC17 subfamily. Interacts (via ANK repeats) with numerous proteins (via the consensus sequence motif [VIAP]-[VIT]-x-x-Q-P). Interacts (via ANK repeats) with CLIP3. Interacts (via ANK repeats) with HTT; this interaction is inversely correlated to the length of the polyglutamine tract added to the huntingtin protein in Huntington disease. Interacts (via ANK repeats) with DNAJC5 (via C-terminus). Interacts (via ANK repeats) with MAP6. Interacts (via ANK repeats) with SNAP23. Interacts (via ANK repeats) with SNAP25. Interacts (via ANK repeats) with EVL. Interacts with SPRED1 and SPRED3. Interacts with GPM6A and OPTN. May interact (via ANK repeats) with SPRED2. May interact with NTRK1; may regulate its localization and function. Post-translationally, autopalmitoylated. Autopalmitoylation has a regulatory role in ZDHHC17-mediated Mg(2+) transport. Expressed in all brain regions. Expression is highest in the cortex, cerebellum, occipital lobe and caudate and lowest in the spinal cord. Expression is also seen in testis, pancreas, heart and kidney.

Its subcellular location is the golgi apparatus membrane. It is found in the cytoplasmic vesicle membrane. The protein resides in the presynaptic cell membrane. The catalysed reaction is L-cysteinyl-[protein] + hexadecanoyl-CoA = S-hexadecanoyl-L-cysteinyl-[protein] + CoA. It catalyses the reaction L-cysteinyl-[protein] + tetradecanoyl-CoA = S-tetradecanoyl-L-cysteinyl-[protein] + CoA. The enzyme catalyses L-cysteinyl-[protein] + octadecanoyl-CoA = S-octadecanoyl-L-cysteinyl-[protein] + CoA. In terms of biological role, palmitoyltransferase that catalyzes the addition of palmitate onto various protein substrates and is involved in a variety of cellular processes. Has no stringent fatty acid selectivity and in addition to palmitate can also transfer onto target proteins myristate from tetradecanoyl-CoA and stearate from octadecanoyl-CoA. Palmitoyltransferase specific for a subset of neuronal proteins, including SNAP25, DLG4/PSD95, GAD2, SYT1 and HTT. Also palmitoylates neuronal protein GPM6A as well as SPRED1 and SPRED3. Could also play a role in axonogenesis through the regulation of NTRK1 and the downstream ERK1/ERK2 signaling cascade. May be involved in the sorting or targeting of critical proteins involved in the initiating events of endocytosis at the plasma membrane. May play a role in Mg(2+) transport. Could also palmitoylate DNAJC5 and regulate its localization to the Golgi membrane. Palmitoylates CASP6, thereby preventing its dimerization and subsequent activation. This is Palmitoyltransferase ZDHHC17 from Homo sapiens (Human).